Consider the following 427-residue polypeptide: Chitin disaccharide deacetylase (427 aa).

Residues 1–22 (MKLNKLAIATLVSAALSQYAFA) form the signal peptide. In terms of domain architecture, NodB homology spans 28-326 (GTIYLTFDDG…LAKQAGYVFD (299 aa)). 2 Chitin-binding type-3 domains span residues 333-375 (PNWQ…SSLW) and 382-419 (TNWT…TPNS).

Belongs to the polysaccharide deacetylase family. Carbohydrate-binding module 12 subfamily.

The enzyme catalyses N,N'-diacetylchitobiose + H2O = N-acetyl-beta-D-glucosaminyl-(1-&gt;4)-D-glucosamine + acetate. The protein operates within glycan degradation; chitin degradation. Its function is as follows. Specifically catalyzes the degradation of N,N'-diacetylchitobiose. Key enzyme in the chitin catabolic cascade. The chain is Chitin disaccharide deacetylase (deaA) from Vibrio alginolyticus.